The primary structure comprises 737 residues: MPLNRTLSMSSLPGLEDWEDEFDLENAVLFEVAWEVANKVGGIYTVLQTKAKVTGDEWGANYFLVGPYTEQGVRTQVELLEAPTPALKRTLDSMNSKGCKVYFGRWLIEGGPLVVLLDVGASAWALERWKGELWDTCNIGVPWYDREANDAVLFGFLTTWFLGEFLAQSEEKLHVVAHFHEWLAGIGLCLCRARRLPVATIFTTHATLLGRYLCAGAVDFYNNLENFNVDKEAGERQIYHRYCMERAAAHCAHVFTTVSQITAIEAQYLLKRKPDIVTPNGLNVKKFSAMHEFQNLHAQSKARIQEFVRGHFYGHLDFNLDKTLYFFIAGRYEFSNKGADVFLEALARLNYLLRVNGSEQTVVAFFIMPARTNNFNVETLKGQAVRKQLWDTANTVKEKFGRKLYESLLVGSLPDMNKMLDKEDFTMMKRAIFATQRQSFPPVCTHNMLDDSSDPILTTIRRIGLFNSSADRVKVIFHPEFLSSTSPLLPVDYEEFVRGCHLGVFPSYYEPWGYTPAECTVMGIPSISTNLSGFGCFMEEHIADPSAYGIYILDRRFRSLDDSCSQLTSFLYSFCQQSRRQRIIQRNRTERLSDLLDWKYLGRYYMSARHMALSKAFPEHFTYEPNEADAAQGYRYPRPASVPPSPSLSRHSSPHQSEDEEDPRNGPLEEDGERYDEDEEAAKDRRNIRAPEWPRRASCTSSTSGSKRNSVDTATSSSLSTPSEPLSPTSSLGEERN.

S8 carries the post-translational modification Phosphoserine; by AMPK and PKA. At S11 the chain carries Phosphoserine. K39 is a UDP binding site. UDP-alpha-D-glucose contacts are provided by H205 and R211. Alpha-D-glucose 6-phosphate-binding residues include H291, E292, Q294, H297, and K301. R331 contacts UDP. UDP-alpha-D-glucose is bound at residue R331. The residue at position 412 (S412) is a Phosphoserine. H501 provides a ligand contact to alpha-D-glucose 6-phosphate. Positions 510, 512, and 513 each coordinate UDP-alpha-D-glucose. T515 is a UDP binding site. Alpha-D-glucose 6-phosphate-binding residues include R582 and R586. The interval 634-737 (YRYPRPASVP…PTSSLGEERN (104 aa)) is disordered. At S641 the chain carries Phosphoserine; by DYRK2, GSK3-alpha, GSK3-beta and PASK. Phosphoserine; by GSK3-alpha and GSK3-beta occurs at positions 645 and 649. S652 bears the Phosphoserine mark. Phosphoserine; by GSK3-alpha and GSK3-beta is present on S653. At S657 the chain carries Phosphoserine; by CK2. Residues 658–681 (EDEEDPRNGPLEEDGERYDEDEEA) show a composition bias toward acidic residues. Positions 682–695 (AKDRRNIRAPEWPR) are enriched in basic and acidic residues. At S698 the chain carries Phosphoserine. The span at 698–714 (SCTSSTSGSKRNSVDTA) shows a compositional bias: polar residues. T700 carries the post-translational modification Phosphothreonine. At S710 the chain carries Phosphoserine. Low complexity predominate over residues 715–737 (TSSSLSTPSEPLSPTSSLGEERN). T721 carries the post-translational modification Phosphothreonine. A phosphoserine mark is found at S727 and S731.

It belongs to the glycosyltransferase 3 family. Part of the GYS1-GYG1 complex, a heterooctamer composed of a tetramer of GYS1 and 2 dimers of GYG1, where each GYS1 protomer binds to one GYG1 subunit (via GYG1 C-terminus); the GYS1 tetramer may dissociate from GYG1 dimers to continue glycogen polymerization on its own. Phosphorylation at Ser-8 by AMPK inactivates the enzyme activity. Primed phosphorylation at Ser-657 (site 5) by CSNK2A1 and CSNK2A2 is required for inhibitory phosphorylation at Ser-641 (site 3a), Ser-645 (site 3b), Ser-649 (site 3c) and Ser-653 (site 4) by GSK3A an GSK3B. Phosphorylated at Ser-641 by PASK, leading to inactivation; phosphorylation by PASK is inhibited by glycogen. Phosphorylated at Ser-641 by DYRK2, leading to inactivation. Dephosphorylation at Ser-641 and Ser-645 by PP1 activates the enzyme.

It catalyses the reaction [(1-&gt;4)-alpha-D-glucosyl](n) + UDP-alpha-D-glucose = [(1-&gt;4)-alpha-D-glucosyl](n+1) + UDP + H(+). It functions in the pathway glycan biosynthesis; glycogen biosynthesis. Allosteric activation by glucose-6-phosphate. Phosphorylation reduces the activity towards UDP-glucose. When in the non-phosphorylated state, glycogen synthase does not require glucose-6-phosphate as an allosteric activator; when phosphorylated it does. Its function is as follows. Glycogen synthase participates in the glycogen biosynthetic process along with glycogenin and glycogen branching enzyme. Extends the primer composed of a few glucose units formed by glycogenin by adding new glucose units to it. In this context, glycogen synthase transfers the glycosyl residue from UDP-Glc to the non-reducing end of alpha-1,4-glucan. The sequence is that of Glycogen [starch] synthase, muscle (GYS1) from Pongo abelii (Sumatran orangutan).